We begin with the raw amino-acid sequence, 192 residues long: Phosphoheptose isomerase (192 aa).

Residues 37 to 192 (ITDSFKNGGK…MMLIEFEMAK (156 aa)) enclose the SIS domain. Substrate is bound at residue 52–54 (NGG). Zn(2+) contacts are provided by H61 and E65. Residues E65, 93-94 (ND), 119-121 (STS), S124, and Q172 contribute to the substrate site. Zn(2+) is bound by residues Q172 and H180.

The protein belongs to the SIS family. GmhA subfamily. Homotetramer. The cofactor is Zn(2+).

It localises to the cytoplasm. It catalyses the reaction 2 D-sedoheptulose 7-phosphate = D-glycero-alpha-D-manno-heptose 7-phosphate + D-glycero-beta-D-manno-heptose 7-phosphate. The protein operates within carbohydrate biosynthesis; D-glycero-D-manno-heptose 7-phosphate biosynthesis; D-glycero-alpha-D-manno-heptose 7-phosphate and D-glycero-beta-D-manno-heptose 7-phosphate from sedoheptulose 7-phosphate: step 1/1. Functionally, catalyzes the isomerization of sedoheptulose 7-phosphate in D-glycero-D-manno-heptose 7-phosphate. The polypeptide is Phosphoheptose isomerase (Glaesserella parasuis serovar 5 (strain SH0165) (Haemophilus parasuis)).